A 332-amino-acid polypeptide reads, in one-letter code: Transcription factor ZEB2 (332 aa).

The interval 1–37 (MQSTESFHALPTRSDVEDPNERRKIQNRIAQKKHRQK) is disordered. Positions 14–24 (SDVEDPNERRK) are enriched in basic and acidic residues. One can recognise a bZIP domain in the interval 17–50 (EDPNERRKIQNRIAQKKHRQKMKRRIEELETKVN). The tract at residues 21-43 (ERRKIQNRIAQKKHRQKMKRRIE) is basic motif. The interval 45–52 (LETKVNNQ) is leucine-zipper. The disordered stretch occupies residues 106-170 (MHDSPRPNQQ…EGSLPTRQHD (65 aa)). Residues 111–134 (RPNQQQRLSVSGMPSSPTSTSNVA) are compositionally biased toward polar residues. Residues 143 to 155 (HSSASNHLSSLSL) are compositionally biased toward low complexity. The segment covering 160 to 170 (TEGSLPTRQHD) has biased composition (polar residues).

The protein belongs to the bZIP family.

Its subcellular location is the nucleus. Transcription factor that specifically controls transcription of the zearalenone biosynthesis cluster genes. This chain is Transcription factor ZEB2, found in Gibberella zeae (strain ATCC MYA-4620 / CBS 123657 / FGSC 9075 / NRRL 31084 / PH-1) (Wheat head blight fungus).